The following is a 93-amino-acid chain: Small ribosomal subunit protein uS19 (93 aa).

It belongs to the universal ribosomal protein uS19 family.

Protein S19 forms a complex with S13 that binds strongly to the 16S ribosomal RNA. The protein is Small ribosomal subunit protein uS19 of Brevibacillus brevis (strain 47 / JCM 6285 / NBRC 100599).